Reading from the N-terminus, the 217-residue chain is Pyridoxine/pyridoxamine 5'-phosphate oxidase (217 aa).

Substrate-binding positions include 13-16 (RREY) and Lys-71. Residues 66-71 (RTVLLK), 81-82 (YT), Arg-87, Lys-88, and Gln-110 each bind FMN. Substrate contacts are provided by Tyr-128, Arg-132, and Ser-136. Residues 145–146 (QS) and Trp-190 contribute to the FMN site. Substrate is bound at residue 196–198 (RLH). Position 200 (Arg-200) interacts with FMN.

Belongs to the pyridoxamine 5'-phosphate oxidase family. In terms of assembly, homodimer. FMN serves as cofactor.

The catalysed reaction is pyridoxamine 5'-phosphate + O2 + H2O = pyridoxal 5'-phosphate + H2O2 + NH4(+). It catalyses the reaction pyridoxine 5'-phosphate + O2 = pyridoxal 5'-phosphate + H2O2. The protein operates within cofactor metabolism; pyridoxal 5'-phosphate salvage; pyridoxal 5'-phosphate from pyridoxamine 5'-phosphate: step 1/1. It participates in cofactor metabolism; pyridoxal 5'-phosphate salvage; pyridoxal 5'-phosphate from pyridoxine 5'-phosphate: step 1/1. In terms of biological role, catalyzes the oxidation of either pyridoxine 5'-phosphate (PNP) or pyridoxamine 5'-phosphate (PMP) into pyridoxal 5'-phosphate (PLP). This chain is Pyridoxine/pyridoxamine 5'-phosphate oxidase, found in Rubrobacter xylanophilus (strain DSM 9941 / JCM 11954 / NBRC 16129 / PRD-1).